Consider the following 602-residue polypeptide: MRGAFLAAAAAVAGTAMADVAHMRRHGHDSFHHNRAYQPEVPAEGDENCECTTKVITITGPPTLVPINTPAPEPSSSSSSEVPSVPSSESSVVTSEAVTTLHSTSTATVTVVTTPGVDATGAQTPTGGVPGTPEASSPAGTPEASTPAVPATSESPLPTPGVTSFSSTGIYTIPATTVTVRDTTTVCGATTTELPSGTHTFGGVTTVVSTATTVTCPVATVEPSGSTVTSKIYTTTYVCPSAGTYTIAPTTTYVPTSTVVVYPTPATITPGTYTQDEQTVTVTRTDFTYVCPFTGNDQPTSAPVASTSAVPVTTTAAPSTTSAVASSSASASSTATAVPTGVSGQQMGMTYSPYTNEGGCQSKDQVLKDVALIKQKGFTHVRVYSTDCNGLEYIGEAARENGLKMIIGVFISSTGISGAQEQVTAITKWAQWDLVTLVVVGNEAIQNGYTDASSLAGFISSCKSSFQASGYSGQVTTTEPINVWQQSGSALCGAVDILGANLHPFFNADVTPDQAGSFVRAQIKDLEAVCNKDVINLETGWPSAGNANGKAVPGTAQQAAAIKALVEEVGSQSVFFSYSNDLWKDAGEFDVERYWGCIDQFK.

Residues 1–18 (MRGAFLAAAAAVAGTAMA) form the signal peptide. Disordered regions lie at residues 61 to 94 (PPTL…SVVT) and 116 to 166 (GVDA…TSFS). Residues 74 to 94 (PSSSSSSEVPSVPSSESSVVT) are compositionally biased toward low complexity. Residues 152–166 (TSESPLPTPGVTSFS) show a composition bias toward polar residues. Glutamate 443 (proton donor) is an active-site residue. Residue glutamate 538 is the Nucleophile of the active site.

The protein belongs to the glycosyl hydrolase 17 family.

The protein resides in the secreted. It localises to the cell wall. The catalysed reaction is Hydrolysis of terminal, non-reducing beta-D-glucosyl residues with release of beta-D-glucose.. It participates in glycan metabolism; cellulose degradation. Functionally, beta-glucosidases are one of a number of cellulolytic enzymes involved in the degradation of cellulosic biomass. Catalyzes the last step releasing glucose from the inhibitory cellobiose. The sequence is that of Probable beta-glucosidase btgE (btgE) from Aspergillus flavus (strain ATCC 200026 / FGSC A1120 / IAM 13836 / NRRL 3357 / JCM 12722 / SRRC 167).